Consider the following 710-residue polypeptide: Polyribonucleotide nucleotidyltransferase (710 aa).

Asp-489 and Asp-495 together coordinate Mg(2+). The KH domain occupies 556–615 (PKIDTIKIDVDKIKVVIGKGGETIDKIIAETGVKIDIDDEGNVSIYSSDQAAIDRTKEII). Positions 625–693 (GEVYHAKVVR…EKGRVDASMK (69 aa)) constitute an S1 motif domain. The interval 691-710 (SMKALIPRPPKPEKKEEKHD) is disordered. Basic and acidic residues predominate over residues 700–710 (PKPEKKEEKHD).

The protein belongs to the polyribonucleotide nucleotidyltransferase family. It depends on Mg(2+) as a cofactor.

It localises to the cytoplasm. The enzyme catalyses RNA(n+1) + phosphate = RNA(n) + a ribonucleoside 5'-diphosphate. Involved in mRNA degradation. Catalyzes the phosphorolysis of single-stranded polyribonucleotides processively in the 3'- to 5'-direction. The polypeptide is Polyribonucleotide nucleotidyltransferase (Streptococcus pyogenes serotype M49 (strain NZ131)).